A 339-amino-acid polypeptide reads, in one-letter code: MEEAHNMREISIREIVVNHAVLSSCIDKCGDCFASEAARIKFDNDIEAIFELKRKRNAVILAHNYQTPEIFHGVADIVGDSLALARKAIDVDADVIVLAGVHFMAETAKLLNPEKTVLIPDREAGCSLAESITPEDVALLRQAHPGIPIVTYVNTSAAVKAASDICCTSGNAKKVVEALGVPKVLMIPDEYLARNVAKETEVQIISWHGHCEVHELFSASDILQLRENHPGVTVLAHPECPPDVVAAADFAGSTAAMSDYVTTKQPKRVVLLTECSMSDNIAVHHPDVEFISSCNLCPHMKRITLANIRTALEENRHEVTVDAKIADPARRAVERMLAI.

Iminosuccinate is bound by residues H63 and S81. Position 126 (C126) interacts with [4Fe-4S] cluster. Iminosuccinate-binding positions include 152–154 and S169; that span reads YVN. Position 211 (C211) interacts with [4Fe-4S] cluster. Iminosuccinate contacts are provided by residues 237–239 and T254; that span reads HPE. A [4Fe-4S] cluster-binding site is contributed by C297.

This sequence belongs to the quinolinate synthase family. Type 2 subfamily. It depends on [4Fe-4S] cluster as a cofactor.

It localises to the cytoplasm. It carries out the reaction iminosuccinate + dihydroxyacetone phosphate = quinolinate + phosphate + 2 H2O + H(+). It participates in cofactor biosynthesis; NAD(+) biosynthesis; quinolinate from iminoaspartate: step 1/1. In terms of biological role, catalyzes the condensation of iminoaspartate with dihydroxyacetone phosphate to form quinolinate. In Xylella fastidiosa (strain Temecula1 / ATCC 700964), this protein is Quinolinate synthase.